A 443-amino-acid polypeptide reads, in one-letter code: Enolase B (443 aa).

Residues H156 and E165 each coordinate substrate. Residue E208 is the Proton donor of the active site. Residues D243, E296, and D323 each contribute to the Mg(2+) site. Substrate contacts are provided by E296 and D323. The active-site Proton acceptor is K348. Residues S375–S378 and K399 contribute to the substrate site.

Belongs to the enolase family. As to quaternary structure, homodimer. Requires Mg(2+) as cofactor.

Its subcellular location is the cytoplasm. It catalyses the reaction (2R)-2-phosphoglycerate = phosphoenolpyruvate + H2O. The protein operates within carbohydrate degradation; glycolysis; pyruvate from D-glyceraldehyde 3-phosphate: step 4/5. This Dictyostelium discoideum (Social amoeba) protein is Enolase B (enoB).